The primary structure comprises 178 residues: Crossover junction endodeoxyribonuclease RuvC (178 aa).

Catalysis depends on residues aspartate 11, glutamate 71, and aspartate 143. Positions 11, 71, and 143 each coordinate Mg(2+).

The protein belongs to the RuvC family. As to quaternary structure, homodimer which binds Holliday junction (HJ) DNA. The HJ becomes 2-fold symmetrical on binding to RuvC with unstacked arms; it has a different conformation from HJ DNA in complex with RuvA. In the full resolvosome a probable DNA-RuvA(4)-RuvB(12)-RuvC(2) complex forms which resolves the HJ. It depends on Mg(2+) as a cofactor.

The protein localises to the cytoplasm. The catalysed reaction is Endonucleolytic cleavage at a junction such as a reciprocal single-stranded crossover between two homologous DNA duplexes (Holliday junction).. The RuvA-RuvB-RuvC complex processes Holliday junction (HJ) DNA during genetic recombination and DNA repair. Endonuclease that resolves HJ intermediates. Cleaves cruciform DNA by making single-stranded nicks across the HJ at symmetrical positions within the homologous arms, yielding a 5'-phosphate and a 3'-hydroxyl group; requires a central core of homology in the junction. The consensus cleavage sequence is 5'-(A/T)TT(C/G)-3'. Cleavage occurs on the 3'-side of the TT dinucleotide at the point of strand exchange. HJ branch migration catalyzed by RuvA-RuvB allows RuvC to scan DNA until it finds its consensus sequence, where it cleaves and resolves the cruciform DNA. This is Crossover junction endodeoxyribonuclease RuvC from Neisseria meningitidis serogroup C / serotype 2a (strain ATCC 700532 / DSM 15464 / FAM18).